The sequence spans 331 residues: MTFEVGVVGAGAWGTALAQMLSSDGREVLLWARESEVVREINEDRRNGPFLPSACLNPTITATADLADMARIPVLLLVTPAQHLASVLGGIGRDGGDVVLCSKGIEAGTGRLMADVARDAAPDASIAVLSGPTFAHEVADGLPTAVTLACAGGEEQWLRLSTAIARPTFRPYYSDDVTGAEIGGAVKNVLAIACGVVEGLRLGQNARAALISRGFAEMQRFGLALGARPKTLSGLSGLGDLVLTCSSTSSRNFSLGKALGEGASATAVMADRATVAEGAFTAPVLADLARGRGISMPIVEAVVTLLEGAAPAREVVAGLLSRPLTAENPLV.

NADPH-binding residues include tryptophan 13, arginine 33, and lysine 103. Positions 103, 131, and 133 each coordinate sn-glycerol 3-phosphate. Alanine 135 contacts NADPH. Positions 187, 240, 250, 251, and 252 each coordinate sn-glycerol 3-phosphate. Lysine 187 (proton acceptor) is an active-site residue. Position 251 (arginine 251) interacts with NADPH. NADPH contacts are provided by valine 275 and glutamate 277.

This sequence belongs to the NAD-dependent glycerol-3-phosphate dehydrogenase family.

The protein resides in the cytoplasm. It carries out the reaction sn-glycerol 3-phosphate + NAD(+) = dihydroxyacetone phosphate + NADH + H(+). The catalysed reaction is sn-glycerol 3-phosphate + NADP(+) = dihydroxyacetone phosphate + NADPH + H(+). It functions in the pathway membrane lipid metabolism; glycerophospholipid metabolism. Functionally, catalyzes the reduction of the glycolytic intermediate dihydroxyacetone phosphate (DHAP) to sn-glycerol 3-phosphate (G3P), the key precursor for phospholipid synthesis. This Novosphingobium aromaticivorans (strain ATCC 700278 / DSM 12444 / CCUG 56034 / CIP 105152 / NBRC 16084 / F199) protein is Glycerol-3-phosphate dehydrogenase [NAD(P)+].